Here is a 367-residue protein sequence, read N- to C-terminus: Chorismate synthase (367 aa).

NADP(+) is bound at residue arginine 48. FMN contacts are provided by residues 125–127 (RAS), glycine 290, 305–309 (KPTSS), and arginine 333.

Belongs to the chorismate synthase family. Homotetramer. It depends on FMNH2 as a cofactor.

It carries out the reaction 5-O-(1-carboxyvinyl)-3-phosphoshikimate = chorismate + phosphate. The protein operates within metabolic intermediate biosynthesis; chorismate biosynthesis; chorismate from D-erythrose 4-phosphate and phosphoenolpyruvate: step 7/7. In terms of biological role, catalyzes the anti-1,4-elimination of the C-3 phosphate and the C-6 proR hydrogen from 5-enolpyruvylshikimate-3-phosphate (EPSP) to yield chorismate, which is the branch point compound that serves as the starting substrate for the three terminal pathways of aromatic amino acid biosynthesis. This reaction introduces a second double bond into the aromatic ring system. The sequence is that of Chorismate synthase from Protochlamydia amoebophila (strain UWE25).